Consider the following 306-residue polypeptide: Ankyrin repeat domain-containing protein 23 (306 aa).

Positions 41–90 (QEAVAREKLKLEEEKRKKLERFNSSRLTLDNLTDLENLVQRRRKKRQRHK) form a coiled coil. The disordered stretch occupies residues 78–107 (LVQRRRKKRQRHKVPPREPESGAEPQPQVP). Positions 80–91 (QRRRKKRQRHKV) are enriched in basic residues. ANK repeat units follow at residues 144 to 173 (LHRTALHWACLKGHRQLVNKLLAAGAAIEV), 177 to 206 (LDRTPVFWACRGGHLDILKRLLNQGAQVNA), 210 to 239 (IWSTPLHVAVRMGHSDCLEHLIECGAHINA), and 243 to 272 (EGDTALHEAVRYGHHKATKLLLLYGAKLGV). An interaction with TTN region spans residues 179–196 (RTPVFWACRGGHLDILKR).

As to quaternary structure, interacts with titin/TTN and MYPN.

Its subcellular location is the nucleus. Its function is as follows. May be involved in the energy metabolism. Could be a molecular link between myofibrillar stretch-induced signaling pathways and muscle gene expression. This is Ankyrin repeat domain-containing protein 23 (Ankrd23) from Mus musculus (Mouse).